We begin with the raw amino-acid sequence, 261 residues long: Syntaxin-7 (261 aa).

N-acetylserine is present on Ser2. Topologically, residues 2 to 238 (SYTPGVGGDP…DYQRKSRKTL (237 aa)) are cytoplasmic. Thr4 is subject to Phosphothreonine. Ser45 bears the Phosphoserine mark. A coiled-coil region spans residues 47–69 (ELRQQLQQKQQYTNQLAKETDKY). Position 75 is a phosphoserine (Ser75). Position 79 is a phosphothreonine (Thr79). Ser125, Ser126, Ser129, and Ser205 each carry phosphoserine. Residues 129-148 (SGSFPEDSSKERNLVSWESQ) form a disordered region. The region spanning 165-227 (LRLIHERESS…QQANQQLSRA (63 aa)) is the t-SNARE coiled-coil homology domain. The chain crosses the membrane as a helical; Anchor for type IV membrane protein span at residues 239-259 (CIIILILVIGVAIISLIIWGL). Topologically, residues 260 to 261 (NH) are vesicular.

The protein belongs to the syntaxin family. Forms a SNARE complex with VTI1B, STX8 and VAMP8 which functions in the homotypic fusion of late endosomes. Component of the SNARE complex composed of STX7, STX8, VAMP7 and VTI1B that is required for heterotypic fusion of late endosomes with lysosomes. Interacts with VPS11, VPS16 and VPS18. Interacts with VPS33A. Interacts with TPC1. As to expression, highest expression is found in placenta followed by heart, skeletal muscle, kidney and brain. Low expression is found in pancreas, lung and liver.

It is found in the early endosome membrane. Functionally, may be involved in protein trafficking from the plasma membrane to the early endosome (EE) as well as in homotypic fusion of endocytic organelles. Mediates the endocytic trafficking from early endosomes to late endosomes and lysosomes. This is Syntaxin-7 (STX7) from Homo sapiens (Human).